The sequence spans 302 residues: uncharacterized protein (302 aa).

The first 22 residues, 1–22, serve as a signal peptide directing secretion; the sequence is MLVVFKRLGFIVSIFSLTFLSA. Cysteine 23 carries the N-palmitoyl cysteine lipid modification. Cysteine 23 carries S-diacylglycerol cysteine lipidation.

This sequence belongs to the MG067/MG068/MG395 family.

The protein localises to the cell membrane. This is an uncharacterized protein from Mycoplasma pneumoniae (strain ATCC 29342 / M129 / Subtype 1) (Mycoplasmoides pneumoniae).